Consider the following 366-residue polypeptide: Carbamoyl phosphate synthase small chain (366 aa).

The tract at residues 1–171 (MKKRKLILED…KPYVVPGRGL (171 aa)) is CPSase. L-glutamine-binding residues include serine 46, glycine 220, and glycine 222. The Glutamine amidotransferase type-1 domain occupies 172–359 (RVVMVDFGAK…LNLIKASKVK (188 aa)). Residue cysteine 247 is the Nucleophile of the active site. L-glutamine is bound by residues leucine 248, glutamine 251, asparagine 289, and tyrosine 292. Active-site residues include histidine 332 and glutamate 334.

The protein belongs to the CarA family. In terms of assembly, composed of two chains; the small (or glutamine) chain promotes the hydrolysis of glutamine to ammonia, which is used by the large (or ammonia) chain to synthesize carbamoyl phosphate. Tetramer of heterodimers (alpha,beta)4.

The enzyme catalyses hydrogencarbonate + L-glutamine + 2 ATP + H2O = carbamoyl phosphate + L-glutamate + 2 ADP + phosphate + 2 H(+). It carries out the reaction L-glutamine + H2O = L-glutamate + NH4(+). Its pathway is amino-acid biosynthesis; L-arginine biosynthesis; carbamoyl phosphate from bicarbonate: step 1/1. It participates in pyrimidine metabolism; UMP biosynthesis via de novo pathway; (S)-dihydroorotate from bicarbonate: step 1/3. Functionally, small subunit of the glutamine-dependent carbamoyl phosphate synthetase (CPSase). CPSase catalyzes the formation of carbamoyl phosphate from the ammonia moiety of glutamine, carbonate, and phosphate donated by ATP, constituting the first step of 2 biosynthetic pathways, one leading to arginine and/or urea and the other to pyrimidine nucleotides. The small subunit (glutamine amidotransferase) binds and cleaves glutamine to supply the large subunit with the substrate ammonia. The sequence is that of Carbamoyl phosphate synthase small chain from Oceanobacillus iheyensis (strain DSM 14371 / CIP 107618 / JCM 11309 / KCTC 3954 / HTE831).